The primary structure comprises 473 residues: Hexaprenyl pyrophosphate synthase, mitochondrial (473 aa).

Isopentenyl diphosphate is bound by residues K84, R87, and H186. Residues D193 and D197 each coordinate Mg(2+). Residue R202 participates in an all-trans-polyprenyl diphosphate binding. Residue R203 coordinates isopentenyl diphosphate. An all-trans-polyprenyl diphosphate contacts are provided by K323, T324, Q361, and K378.

It belongs to the FPP/GGPP synthase family. The cofactor is Mg(2+).

Its subcellular location is the mitochondrion inner membrane. It functions in the pathway cofactor biosynthesis; ubiquinone biosynthesis. Functionally, assembly of polyisoprenoid side chains. The polyprenyl synthase of coenzyme Q biosynthesis catalyzes the formation from isopentenyl diphosphate of all trans-polyprenyl pyrophosphates generally ranging in length of between 6 and 10 isoprene units depending on the species. In Saccharomyces cerevisiae (strain ATCC 204508 / S288c) (Baker's yeast), this protein is Hexaprenyl pyrophosphate synthase, mitochondrial (COQ1).